Consider the following 357-residue polypeptide: DNA primase small subunit PriS (357 aa).

Active-site residues include Asp-105, Asp-107, and Asp-259.

The protein belongs to the eukaryotic-type primase small subunit family. Heterodimer of a small subunit (PriS) and a large subunit (PriL). Requires Mg(2+) as cofactor. It depends on Mn(2+) as a cofactor.

Its function is as follows. Catalytic subunit of DNA primase, an RNA polymerase that catalyzes the synthesis of short RNA molecules used as primers for DNA polymerase during DNA replication. The small subunit contains the primase catalytic core and has DNA synthesis activity on its own. Binding to the large subunit stabilizes and modulates the activity, increasing the rate of DNA synthesis while decreasing the length of the DNA fragments, and conferring RNA synthesis capability. The DNA polymerase activity may enable DNA primase to also catalyze primer extension after primer synthesis. May also play a role in DNA repair. The chain is DNA primase small subunit PriS from Methanococcus maripaludis (strain C5 / ATCC BAA-1333).